Consider the following 433-residue polypeptide: Homogentisate 1,2-dioxygenase (433 aa).

Residue H288 is the Proton acceptor of the active site. The Fe cation site is built by H331 and E337. Y346 and H367 together coordinate homogentisate. Residue H367 coordinates Fe cation.

It belongs to the homogentisate dioxygenase family. As to quaternary structure, hexamer; dimer of trimers. Fe cation serves as cofactor.

The catalysed reaction is homogentisate + O2 = 4-maleylacetoacetate + H(+). The protein operates within amino-acid degradation; L-phenylalanine degradation; acetoacetate and fumarate from L-phenylalanine: step 4/6. In terms of biological role, involved in the catabolism of homogentisate (2,5-dihydroxyphenylacetate or 2,5-OH-PhAc), a central intermediate in the degradation of phenylalanine and tyrosine. Catalyzes the oxidative ring cleavage of the aromatic ring of homogentisate to yield maleylacetoacetate. This chain is Homogentisate 1,2-dioxygenase, found in Pseudomonas putida (strain GB-1).